The sequence spans 69 residues: Large ribosomal subunit protein bL31 (69 aa).

4 residues coordinate Zn(2+): C16, C18, C37, and C40.

This sequence belongs to the bacterial ribosomal protein bL31 family. Type A subfamily. Part of the 50S ribosomal subunit. It depends on Zn(2+) as a cofactor.

Binds the 23S rRNA. The sequence is that of Large ribosomal subunit protein bL31 from Teredinibacter turnerae (strain ATCC 39867 / T7901).